We begin with the raw amino-acid sequence, 313 residues long: Sorting nexin-20 (313 aa).

The disordered stretch occupies residues 1–61 (MASPQHPGGP…MTTRELQEHW (61 aa)). Phosphoserine is present on Ser-3. Over residues 29–38 (PPGPDLPCPG) the composition is skewed to pro residues. Polar residues predominate over residues 45–55 (GPTSNSNMTTR). One can recognise a PX domain in the interval 71–188 (VRLLFEIASA…DFLTRPELCE (118 aa)). Arg-113, Ser-115, Lys-140, and Arg-154 together coordinate a 1,2-diacyl-sn-glycero-3-phospho-(1D-myo-inositol-3-phosphate).

Belongs to the sorting nexin family. Interacts with SELPLG. Interaction with SELPLG is controversial.

It localises to the early endosome membrane. Its subcellular location is the cell membrane. The protein resides in the cytoplasm. The protein localises to the nucleus. Functionally, may play a role in cellular vesicle trafficking. Has been proposed to function as a sorting protein that targets SELPLG into endosomes, but has no effect on SELPLG internalization from the cell surface, or on SELPLG-mediated cell-cell adhesion. The chain is Sorting nexin-20 (Snx20) from Rattus norvegicus (Rat).